The chain runs to 159 residues: Major strawberry allergen Fra a 1-C (159 aa).

Belongs to the BetVI family. Monomer.

The protein is Major strawberry allergen Fra a 1-C of Fragaria ananassa (Strawberry).